Here is a 92-residue protein sequence, read N- to C-terminus: Small ribosomal subunit protein uS19c (92 aa).

This sequence belongs to the universal ribosomal protein uS19 family.

Its subcellular location is the plastid. It is found in the chloroplast. Protein S19 forms a complex with S13 that binds strongly to the 16S ribosomal RNA. This is Small ribosomal subunit protein uS19c from Nicotiana tomentosiformis (Tobacco).